The following is a 1145-amino-acid chain: Protocadherin-19 (1145 aa).

The first 21 residues, 1–21 (MESLLLPVLLLLAVLWTQAAA), serve as a signal peptide directing secretion. Cadherin domains lie at 22-129 (LINL…APSF), 130-238 (PAAQ…NPVF), 239-346 (GEST…PPII), 350-453 (SVNS…HPHF), 454-563 (SKPY…TPVI), and 569-672 (INGT…QESM). Topologically, residues 22-678 (LINLKYSVEE…QESMGSVNLS (657 aa)) are extracellular. Residues Glu-31, Glu-32, Asp-88, and Asp-90 each contribute to the Ca(2+) site. Cys-93 and Cys-99 are disulfide-bonded. Ca(2+)-binding residues include Asp-121, Asn-123, Asp-124, Asn-125, Glu-140, Asp-155, Asp-157, Glu-199, Asp-212, Asp-230, Ser-231, Asn-232, Asp-233, Asn-234, and Glu-249. N-linked (GlcNAc...) asparagine glycosylation occurs at Asn-261. Asp-264, Asp-266, Asn-270, Asp-305, Glu-307, Asp-338, Asn-340, Asp-341, Asn-342, Glu-360, Asp-375, Asp-377, Asn-381, Asp-412, and Glu-414 together coordinate Ca(2+). A glycan (N-linked (GlcNAc...) asparagine) is linked at Asn-420. Positions 427, 445, 446, 447, 448, 449, 464, 479, 481, 485, 522, 524, and 537 each coordinate Ca(2+). A glycan (N-linked (GlcNAc...) asparagine) is linked at Asn-485. Asn-546 is a glycosylation site (N-linked (GlcNAc...) asparagine). Ca(2+) is bound by residues Asp-555, Val-556, Asn-557, Asp-558, and Asn-559. N-linked (GlcNAc...) asparagine glycosylation is present at Asn-570. Residues Asp-594, Asp-596, Asn-600, and Asp-646 each coordinate Ca(2+). Asn-676 carries an N-linked (GlcNAc...) asparagine glycan. A helical membrane pass occupies residues 679 to 699 (LIFIIALGSIAGILFVTMIFV). The Cytoplasmic portion of the chain corresponds to 700-1145 (AIKCKRDNKE…SVKRLKDIVL (446 aa)). Disordered stretches follow at residues 901–921 (GNSL…EHDV) and 1094–1145 (LEHH…DIVL). 2 stretches are compositionally biased toward basic and acidic residues: residues 906–921 (DSGH…EHDV) and 1106–1145 (SEAE…DIVL).

Homodimer; antiparallel.

It is found in the cell membrane. In terms of biological role, calcium-dependent cell-adhesion protein. This is Protocadherin-19 (Pcdh19) from Mus musculus (Mouse).